The chain runs to 375 residues: Queuine tRNA-ribosyltransferase (375 aa).

Catalysis depends on D90, which acts as the Proton acceptor. Substrate is bound by residues 90–94 (DSGGF), D144, Q193, and G220. Positions 251 to 257 (GVGTPED) are RNA binding. D270 serves as the catalytic Nucleophile. Residues 275–279 (TRNAR) form an RNA binding; important for wobble base 34 recognition region. Residues C308, C310, C313, and H339 each coordinate Zn(2+).

This sequence belongs to the queuine tRNA-ribosyltransferase family. As to quaternary structure, homodimer. Within each dimer, one monomer is responsible for RNA recognition and catalysis, while the other monomer binds to the replacement base PreQ1. Requires Zn(2+) as cofactor.

The catalysed reaction is 7-aminomethyl-7-carbaguanine + guanosine(34) in tRNA = 7-aminomethyl-7-carbaguanosine(34) in tRNA + guanine. It functions in the pathway tRNA modification; tRNA-queuosine biosynthesis. Its function is as follows. Catalyzes the base-exchange of a guanine (G) residue with the queuine precursor 7-aminomethyl-7-deazaguanine (PreQ1) at position 34 (anticodon wobble position) in tRNAs with GU(N) anticodons (tRNA-Asp, -Asn, -His and -Tyr). Catalysis occurs through a double-displacement mechanism. The nucleophile active site attacks the C1' of nucleotide 34 to detach the guanine base from the RNA, forming a covalent enzyme-RNA intermediate. The proton acceptor active site deprotonates the incoming PreQ1, allowing a nucleophilic attack on the C1' of the ribose to form the product. After dissociation, two additional enzymatic reactions on the tRNA convert PreQ1 to queuine (Q), resulting in the hypermodified nucleoside queuosine (7-(((4,5-cis-dihydroxy-2-cyclopenten-1-yl)amino)methyl)-7-deazaguanosine). This Herminiimonas arsenicoxydans protein is Queuine tRNA-ribosyltransferase.